Here is a 1360-residue protein sequence, read N- to C-terminus: DNA-directed RNA polymerase subunit beta (1360 aa).

This sequence belongs to the RNA polymerase beta chain family. As to quaternary structure, the RNAP catalytic core consists of 2 alpha, 1 beta, 1 beta' and 1 omega subunit. When a sigma factor is associated with the core the holoenzyme is formed, which can initiate transcription.

The catalysed reaction is RNA(n) + a ribonucleoside 5'-triphosphate = RNA(n+1) + diphosphate. DNA-dependent RNA polymerase catalyzes the transcription of DNA into RNA using the four ribonucleoside triphosphates as substrates. The sequence is that of DNA-directed RNA polymerase subunit beta from Magnetococcus marinus (strain ATCC BAA-1437 / JCM 17883 / MC-1).